Reading from the N-terminus, the 366-residue chain is ATP-dependent 6-phosphofructokinase 2 (366 aa).

Residues Gly-15, 78-79 (KD), and 119-122 (GDGT) each bind ATP. Position 120 (Asp-120) interacts with Mg(2+). Substrate-binding positions include 142–144 (TID), Arg-179, 186–188 (MGR), Glu-239, Arg-284, and 290–293 (HIQR). Asp-144 acts as the Proton acceptor in catalysis.

The protein belongs to the phosphofructokinase type A (PFKA) family. Mixed-substrate PFK group III subfamily. Homodimer or homotetramer. Requires Mg(2+) as cofactor.

The protein localises to the cytoplasm. The catalysed reaction is beta-D-fructose 6-phosphate + ATP = beta-D-fructose 1,6-bisphosphate + ADP + H(+). The protein operates within carbohydrate degradation; glycolysis; D-glyceraldehyde 3-phosphate and glycerone phosphate from D-glucose: step 3/4. With respect to regulation, subject to allosteric activation by ADP and other diphosphonucleosides, and inhibition by phosphoenolpyruvate. Its function is as follows. Catalyzes the phosphorylation of D-fructose 6-phosphate to fructose 1,6-bisphosphate by ATP, the first committing step of glycolysis. The sequence is that of ATP-dependent 6-phosphofructokinase 2 from Clostridium perfringens (strain 13 / Type A).